A 355-amino-acid polypeptide reads, in one-letter code: Protein RecA (355 aa).

Residue 72–79 (GPESSGKT) coordinates ATP.

This sequence belongs to the RecA family.

It is found in the cytoplasm. Its function is as follows. Can catalyze the hydrolysis of ATP in the presence of single-stranded DNA, the ATP-dependent uptake of single-stranded DNA by duplex DNA, and the ATP-dependent hybridization of homologous single-stranded DNAs. It interacts with LexA causing its activation and leading to its autocatalytic cleavage. This chain is Protein RecA, found in Thermosynechococcus vestitus (strain NIES-2133 / IAM M-273 / BP-1).